A 356-amino-acid polypeptide reads, in one-letter code: Tyrosine recombinase XerS (356 aa).

One can recognise a Core-binding (CB) domain in the interval 16-121; it reads LMPWYVLEYY…ALSSLYKYLT (106 aa). Residues 169 to 354 form the Tyr recombinase domain; sequence EFLEYVDCEY…VNDEQKNALD (186 aa). Active-site residues include Arg210, Lys234, His306, Arg309, and His332. Tyr341 serves as the catalytic O-(3'-phospho-DNA)-tyrosine intermediate.

It belongs to the 'phage' integrase family. XerS subfamily.

Its subcellular location is the cytoplasm. FtsK is required for recombination. Its function is as follows. Site-specific tyrosine recombinase, which acts by catalyzing the cutting and rejoining of the recombining DNA molecules. Essential to convert dimers of the bacterial chromosome into monomers to permit their segregation at cell division. The chain is Tyrosine recombinase XerS from Streptococcus mutans serotype c (strain ATCC 700610 / UA159).